The chain runs to 120 residues: Fumarate reductase subunit D (120 aa).

The next 3 membrane-spanning stretches (helical) occupy residues 25 to 45 (FAML…LGIL), 57 to 77 (GFVT…LPMW), and 100 to 120 (IACY…VFMI).

This sequence belongs to the FrdD family. Part of an enzyme complex containing four subunits: a flavoprotein (FrdA), an iron-sulfur protein (FrdB), and two hydrophobic anchor proteins (FrdC and FrdD).

The protein localises to the cell inner membrane. Functionally, anchors the catalytic components of the fumarate reductase complex to the cell membrane, binds quinones. This is Fumarate reductase subunit D from Photobacterium profundum (strain SS9).